The chain runs to 718 residues: Ribosomal RNA large subunit methyltransferase K/L (718 aa).

One can recognise a THUMP domain in the interval 43–154 (TQYRILLWSR…QDELVVSLDL (112 aa)).

The protein belongs to the methyltransferase superfamily. RlmKL family.

Its subcellular location is the cytoplasm. It carries out the reaction guanosine(2445) in 23S rRNA + S-adenosyl-L-methionine = N(2)-methylguanosine(2445) in 23S rRNA + S-adenosyl-L-homocysteine + H(+). It catalyses the reaction guanosine(2069) in 23S rRNA + S-adenosyl-L-methionine = N(2)-methylguanosine(2069) in 23S rRNA + S-adenosyl-L-homocysteine + H(+). Its function is as follows. Specifically methylates the guanine in position 2445 (m2G2445) and the guanine in position 2069 (m7G2069) of 23S rRNA. The polypeptide is Ribosomal RNA large subunit methyltransferase K/L (Histophilus somni (strain 129Pt) (Haemophilus somnus)).